The following is a 77-amino-acid chain: Defensin-like protein 91 (77 aa).

The signal sequence occupies residues 1-27; sequence METKKISYFLLPSLMIVALIFQPMCSA. 4 disulfides stabilise this stretch: Cys38–Cys75, Cys43–Cys64, Cys49–Cys73, and Cys53–Cys74.

This sequence belongs to the DEFL family.

It localises to the secreted. In Arabidopsis thaliana (Mouse-ear cress), this protein is Defensin-like protein 91 (LCR47).